The following is a 912-amino-acid chain: Ubiquitin carboxyl-terminal hydrolase 3 (912 aa).

Positions 1–11 (MNMQDANKEES) are enriched in basic and acidic residues. Disordered regions lie at residues 1–30 (MNMQ…TNMQ), 68–176 (IYHQ…SYSS), 241–384 (NSSV…TTAG), and 396–417 (GKSS…YVPP). 3 stretches are compositionally biased toward low complexity: residues 82–95 (NNIN…NNNI), 102–140 (SNGI…SNNH), and 159–176 (TNSS…SYSS). Residues 249 to 259 (AHHHTKSHSIP) are compositionally biased toward basic residues. Basic and acidic residues predominate over residues 260–310 (KHNEEVKTETHGEEEDAHDKKPHASKDAHELKKKTEVKKEDAKQDRNEKVI). Residues 335–355 (SKTSSPSPSPPAAKSWSAIAS) show a composition bias toward low complexity. Composition is skewed to polar residues over residues 361 to 384 (RQAS…TTAG) and 396 to 406 (GKSSSPLLSKQ). The region spanning 460-911 (RGIINRANIC…TAYILMYQKR (452 aa)) is the USP domain. C469 acts as the Nucleophile in catalysis. Residue H861 is the Proton acceptor of the active site.

This sequence belongs to the peptidase C19 family. As to quaternary structure, heterotetramer with BRE5; contains two molecules of BRE5 and two molecules of UBP3. Forms a complex composed of CDC48, DOA1, deubiquitinase UBP3 and probably BRE5. Within the complex interacts directly with DOA1 and CDC48 in a BRE5-independent manner.

The enzyme catalyses Thiol-dependent hydrolysis of ester, thioester, amide, peptide and isopeptide bonds formed by the C-terminal Gly of ubiquitin (a 76-residue protein attached to proteins as an intracellular targeting signal).. Its function is as follows. Has an ATP-independent isopeptidase activity, cleaving at the C-terminus of the ubiquitin moiety in natural or engineered linear fusion proteins, irrespective of their size or the presence of an N-terminal extension to ubiquitin. Plays a role in regulation of silencing by interacting with SIR4. Also, in conjunction with BRE5, cleaves ubiquitin, leading to the subsequent mono-ubiquitination of SEC23. Required for ribophagy, a process which relocalizes ribosomal particles into the vacuole for degradation in response to starvation. This is Ubiquitin carboxyl-terminal hydrolase 3 (UBP3) from Saccharomyces cerevisiae (strain ATCC 204508 / S288c) (Baker's yeast).